A 282-amino-acid polypeptide reads, in one-letter code: 3-methyl-2-oxobutanoate hydroxymethyltransferase (282 aa).

Mg(2+) is bound by residues Asp44 and Asp83. Residues 44–45, Asp83, and Lys112 contribute to the 3-methyl-2-oxobutanoate site; that span reads DS. A Mg(2+)-binding site is contributed by Glu114. Catalysis depends on Glu181, which acts as the Proton acceptor.

It belongs to the PanB family. As to quaternary structure, homodecamer; pentamer of dimers. Mg(2+) is required as a cofactor.

Its subcellular location is the cytoplasm. The catalysed reaction is 3-methyl-2-oxobutanoate + (6R)-5,10-methylene-5,6,7,8-tetrahydrofolate + H2O = 2-dehydropantoate + (6S)-5,6,7,8-tetrahydrofolate. It participates in cofactor biosynthesis; coenzyme A biosynthesis. Its function is as follows. Catalyzes the reversible reaction in which hydroxymethyl group from 5,10-methylenetetrahydrofolate is transferred onto alpha-ketoisovalerate to form ketopantoate. This is 3-methyl-2-oxobutanoate hydroxymethyltransferase from Pyrococcus abyssi (strain GE5 / Orsay).